Consider the following 326-residue polypeptide: Diphthine methyltransferase (326 aa).

4 WD repeats span residues 65–105, 113–152, 155–195, and 293–326; these read MHCD…ELMF, DSSV…IKNK, EHDY…SCIW, and EHES…WEDI.

The protein belongs to the DPH7 family.

The protein resides in the cytoplasm. It is found in the nucleus. The enzyme catalyses diphthine methyl ester-[translation elongation factor 2] + H2O = diphthine-[translation elongation factor 2] + methanol + H(+). It functions in the pathway protein modification; peptidyl-diphthamide biosynthesis. Functionally, catalyzes the demethylation of diphthine methyl ester to form diphthine, an intermediate in diphthamide biosynthesis, a post-translational modification of histidine which occurs in translation elongation factor 2 (eft201 and eft202). In Schizosaccharomyces pombe (strain 972 / ATCC 24843) (Fission yeast), this protein is Diphthine methyltransferase (rrt2).